Consider the following 209-residue polypeptide: N-(5'-phosphoribosyl)anthranilate isomerase (209 aa).

It belongs to the TrpF family.

The catalysed reaction is N-(5-phospho-beta-D-ribosyl)anthranilate = 1-(2-carboxyphenylamino)-1-deoxy-D-ribulose 5-phosphate. Its pathway is amino-acid biosynthesis; L-tryptophan biosynthesis; L-tryptophan from chorismate: step 3/5. This is N-(5'-phosphoribosyl)anthranilate isomerase from Pyrobaculum islandicum (strain DSM 4184 / JCM 9189 / GEO3).